The sequence spans 414 residues: Esterase FrsA (414 aa).

This sequence belongs to the FrsA family.

The catalysed reaction is a carboxylic ester + H2O = an alcohol + a carboxylate + H(+). Functionally, catalyzes the hydrolysis of esters. The polypeptide is Esterase FrsA (Shigella dysenteriae serotype 1 (strain Sd197)).